Consider the following 435-residue polypeptide: Histidine--tRNA ligase (435 aa).

The protein belongs to the class-II aminoacyl-tRNA synthetase family. As to quaternary structure, homodimer.

It localises to the cytoplasm. It catalyses the reaction tRNA(His) + L-histidine + ATP = L-histidyl-tRNA(His) + AMP + diphosphate + H(+). The polypeptide is Histidine--tRNA ligase (Synechococcus sp. (strain ATCC 27144 / PCC 6301 / SAUG 1402/1) (Anacystis nidulans)).